The primary structure comprises 225 residues: J-type co-chaperone jac1, mitochondrial (225 aa).

The transit peptide at 1–49 (MLKQAGNQSFRPFISFAQKSLFNRQITGNHWIFARFKFYPLNKIVNYNH) directs the protein to the mitochondrion. Residues 61–137 (NFYKQFEGDI…LTRAEYILQL (77 aa)) enclose the J domain. The HSP70 binding motif lies at 98–100 (HPD).

It belongs to the HscB family. Interacts with ssc1.

The protein localises to the mitochondrion matrix. Its function is as follows. Co-chaperone required for the assembly of iron-sulfur (Fe/S) clusters in mitochondria. Stimulates the ATPase activity of the mitochondrial Hsp70 chaperone ssc1, to mediate the transfer of iron-sulfur clusters from isu1 to grx5. The polypeptide is J-type co-chaperone jac1, mitochondrial (Schizosaccharomyces pombe (strain 972 / ATCC 24843) (Fission yeast)).